Here is a 193-residue protein sequence, read N- to C-terminus: Ion-translocating oxidoreductase complex subunit A (193 aa).

6 helical membrane-spanning segments follow: residues 5–25 (FFFI…FLGL), 47–67 (FVVV…LLPF), 72–92 (LRII…EIIL), 102–122 (ILGI…IPLF), 134–154 (ILYA…FSSI), and 171–191 (PIVL…KGLV).

Belongs to the NqrDE/RnfAE family. The complex is composed of six subunits: RnfA, RnfB, RnfC, RnfD, RnfE and RnfG.

Its subcellular location is the cell inner membrane. Its function is as follows. Part of a membrane-bound complex that couples electron transfer with translocation of ions across the membrane. This chain is Ion-translocating oxidoreductase complex subunit A, found in Buchnera aphidicola subsp. Schizaphis graminum (strain Sg).